The sequence spans 175 residues: Probable DNA-directed RNA polymerase subunit delta (175 aa).

The region spanning 14–81 (MALVEIAHEI…SDQTWGLRSW (68 aa)) is the HTH HARE-type domain. The disordered stretch occupies residues 110–175 (LDLDEFEEVD…YDDEEEDRKD (66 aa)).

The protein belongs to the RpoE family. As to quaternary structure, RNAP is composed of a core of 2 alpha, a beta and a beta' subunits. The core is associated with a delta subunit and one of several sigma factors.

In terms of biological role, participates in both the initiation and recycling phases of transcription. In the presence of the delta subunit, RNAP displays an increased specificity of transcription, a decreased affinity for nucleic acids, and an increased efficiency of RNA synthesis because of enhanced recycling. The protein is Probable DNA-directed RNA polymerase subunit delta of Bacillus velezensis (strain DSM 23117 / BGSC 10A6 / LMG 26770 / FZB42) (Bacillus amyloliquefaciens subsp. plantarum).